Consider the following 1227-residue polypeptide: Codanin-1 (1227 aa).

At Ala-2 the chain carries N-acetylalanine. The segment at 63-294 (RVLPQGPPTP…SLTDEPADPA (232 aa)) is disordered. Residue Thr-71 is modified to Phosphothreonine. The segment covering 128–137 (ARERGGRGLE) has biased composition (basic and acidic residues). Low complexity predominate over residues 155–167 (GSGSPSRPSLTLS). Residues 188–208 (PTGTKPSRRINPTPVSEERSL) are interaction with ASF1A/B. The span at 214–232 (CFTSPPISCVPSSQPSALD) shows a compositional bias: polar residues. Positions 247–260 (LQEEREMLRKERSK) are enriched in basic and acidic residues. Phosphoserine is present on residues Ser-265 and Ser-285. Transmembrane regions (helical) follow at residues 312–332 (CIAE…FQLL) and 626–646 (FAVV…VAFL).

Found in a cytosolic complex with ASF1A, ASF1B, IPO4 and histones H3.1 and H4. In terms of tissue distribution, ubiquitously expressed. Isoform 3 is not found in erythroid cells.

The protein localises to the cytoplasm. The protein resides in the nucleus. Its subcellular location is the membrane. May act as a negative regulator of ASF1 in chromatin assembly. This chain is Codanin-1 (CDAN1), found in Homo sapiens (Human).